Reading from the N-terminus, the 70-residue chain is Melittin (70 aa).

Residues 1 to 21 (MKFLVNVALVFMVVYISFIYA) form the signal peptide. The propeptide at 22-43 (APEPEPAPEAEAEADAEADPEA) is removed by a dipeptidylpeptidase. At Gly44 the chain carries N-formylglycine; partial. A Glutamine amide modification is found at Gln69.

Belongs to the melittin family. In terms of assembly, monomer (in solution and for integration into membranes), homotetramer (in solution and potentially as a toroidal pore in membranes), and potenially homomultimer (as a toroidal pore in membranes). As to expression, expressed by the venom gland.

The protein resides in the secreted. It localises to the target cell membrane. Its function is as follows. Main toxin of bee venom with strong hemolytic activity and antimicrobial activity. It has enhancing effects on bee venom phospholipase A2 activity. This amphipathic toxin binds to negatively charged membrane surface and forms pore by inserting into lipid bilayers inducing the leakage of ions and molecules and the enhancement of permeability that ultimately leads to cell lysis. It acts as a voltage-gated pore with higher selectivity for anions over cations. The ion conductance has been shown to be voltage-dependent. Self-association of melittin in membranes is promoted by high ionic strength, but not by the presence of negatively charged lipids. In vivo, intradermal injection into healthy human volunteers produce sharp pain sensation and an inflammatory response. It produces pain by activating primary nociceptor cells directly and indirectly due to its ability to activate plasma membrane phospholipase A2 and its pore-forming activity. This chain is Melittin (MELT), found in Polistes hebraeus (Paper wasp).